The following is a 318-amino-acid chain: O-glucosyltransferase LpsA (318 aa).

It belongs to the glycosyltransferase 90 family.

It functions in the pathway protein modification; protein glycosylation. In terms of biological role, involved in lipopolysaccharide core biosynthesis. The chain is O-glucosyltransferase LpsA (lpsA) from Dichelobacter nodosus (Bacteroides nodosus).